Consider the following 1348-residue polypeptide: Phosphoribosylformylglycinamidine synthase (1348 aa).

ATP is bound by residues Gly-300–Asp-311 and Ala-701. Mg(2+)-binding residues include Asp-702, Glu-741, Asn-745, and Asp-941. ATP is bound at residue Ser-943. Residues Val-1099–Gly-1348 enclose the Glutamine amidotransferase type-1 domain. The active-site Nucleophile is the Cys-1192. Residues His-1313 and Glu-1315 contribute to the active site.

The protein in the N-terminal section; belongs to the FGAMS family. Monomer.

It is found in the cytoplasm. It catalyses the reaction N(2)-formyl-N(1)-(5-phospho-beta-D-ribosyl)glycinamide + L-glutamine + ATP + H2O = 2-formamido-N(1)-(5-O-phospho-beta-D-ribosyl)acetamidine + L-glutamate + ADP + phosphate + H(+). The protein operates within purine metabolism; IMP biosynthesis via de novo pathway; 5-amino-1-(5-phospho-D-ribosyl)imidazole from N(2)-formyl-N(1)-(5-phospho-D-ribosyl)glycinamide: step 1/2. Functionally, phosphoribosylformylglycinamidine synthase involved in the purines biosynthetic pathway. Catalyzes the ATP-dependent conversion of formylglycinamide ribonucleotide (FGAR) and glutamine to yield formylglycinamidine ribonucleotide (FGAM) and glutamate. This Xanthomonas axonopodis pv. citri (strain 306) protein is Phosphoribosylformylglycinamidine synthase.